Reading from the N-terminus, the 117-residue chain is MITRIDVTNRFSEVAIYNGIAYFAGQVPTDESKDAYQQTQQVLSEIDKYLAKSNTDKSRILMATVYLANMADYTEMNRAWDEWVAPNNAPPRAAIEARLANPNWKVEIVITAAINHQ.

This sequence belongs to the RutC family.

This Haemophilus ducreyi (strain 35000HP / ATCC 700724) protein is RutC family protein HD_0322.